Consider the following 348-residue polypeptide: Dihydroorotase (348 aa).

The Zn(2+) site is built by histidine 17 and histidine 19. Substrate contacts are provided by residues 19–21 and asparagine 45; that span reads HLR. Positions 103, 140, and 178 each coordinate Zn(2+). Lysine 103 carries the N6-carboxylysine modification. Histidine 140 is a binding site for substrate. Leucine 223 is a binding site for substrate. Position 251 (aspartate 251) interacts with Zn(2+). Residue aspartate 251 is part of the active site. Substrate is bound by residues histidine 255 and alanine 267.

It belongs to the metallo-dependent hydrolases superfamily. DHOase family. Class II DHOase subfamily. Homodimer. It depends on Zn(2+) as a cofactor.

It carries out the reaction (S)-dihydroorotate + H2O = N-carbamoyl-L-aspartate + H(+). It participates in pyrimidine metabolism; UMP biosynthesis via de novo pathway; (S)-dihydroorotate from bicarbonate: step 3/3. Its function is as follows. Catalyzes the reversible cyclization of carbamoyl aspartate to dihydroorotate. This chain is Dihydroorotase, found in Escherichia fergusonii (strain ATCC 35469 / DSM 13698 / CCUG 18766 / IAM 14443 / JCM 21226 / LMG 7866 / NBRC 102419 / NCTC 12128 / CDC 0568-73).